The following is a 349-amino-acid chain: Protein RecA (349 aa).

66-73 (GPESSGKT) contributes to the ATP binding site.

This sequence belongs to the RecA family.

The protein resides in the cytoplasm. Can catalyze the hydrolysis of ATP in the presence of single-stranded DNA, the ATP-dependent uptake of single-stranded DNA by duplex DNA, and the ATP-dependent hybridization of homologous single-stranded DNAs. It interacts with LexA causing its activation and leading to its autocatalytic cleavage. The protein is Protein RecA of Psychrobacter sp. (strain PRwf-1).